A 263-amino-acid polypeptide reads, in one-letter code: Calpain small subunit 1 (263 aa).

Met1 carries the post-translational modification N-acetylmethionine. Phosphoserine is present on Ser6. Positions 91–125 (EEVRQFRRLFAQLAGDDMEVSATELMNILNKVVTR) constitute an EF-hand 1; atypical domain. 10 residues coordinate Ca(2+): Ala104, Asp107, Glu109, Glu114, Asp132, Asp147, Asp149, Thr151, Lys153, and Glu158. 4 EF-hand domains span residues 134 to 167 (FGID…NNIK), 164 to 199 (NNIK…AGFR), 200 to 228 (LNEH…ISCL), and 229 to 263 (VRLD…TMYS). N6-acetyllysine is present on Lys174. Residues Asp177, Asp179, Ser181, Thr183, Glu188, and Asp220 each contribute to the Ca(2+) site.

As to quaternary structure, homodimer or heterodimer of a large (catalytic) and a small (regulatory) subunit. In presence of calcium, the heterodimer dissociates.

The protein resides in the cytoplasm. The protein localises to the cell membrane. Regulatory subunit of the calcium-regulated non-lysosomal thiol-protease which catalyzes limited proteolysis of substrates involved in cytoskeletal remodeling and signal transduction. Essential for embryonic development. The protein is Calpain small subunit 1 (CAPNS1) of Bos taurus (Bovine).